We begin with the raw amino-acid sequence, 146 residues long: Cytochrome c-556 (146 aa).

Positions methionine 1–alanine 24 are cleaved as a signal peptide. Heme c-binding residues include methionine 35, cysteine 135, cysteine 138, and histidine 139.

In terms of assembly, monomer. In terms of processing, binds 1 heme c group covalently per subunit.

Low-spin monoheme cytochrome c. The protein is Cytochrome c-556 of Agrobacterium fabrum (strain C58 / ATCC 33970) (Agrobacterium tumefaciens (strain C58)).